We begin with the raw amino-acid sequence, 166 residues long: Regulatory protein RecX (166 aa).

The protein belongs to the RecX family.

The protein localises to the cytoplasm. Functionally, modulates RecA activity. This chain is Regulatory protein RecX, found in Salmonella paratyphi A (strain ATCC 9150 / SARB42).